We begin with the raw amino-acid sequence, 502 residues long: MNKRVKIVSTLGPAVEIRGGKKFGESGYWGESLDVEASAKNIAALIEEGANVFRFNFSHGDHPEQGARMATVHRAEEIAGHKVGFLLDTKGPEMRTELFADGADAISVVTGDKFRVATKQGLKSTPELIALNVAGGLDIFDDVEIGQTILIDDGKLGLSLTGKDAATREFEVEAQNDGVIGKQKGVNIPNTKIPFPALAERDDADIRFGLSQPGGINFIAISFVRTANDVKEVRRICEETGNPHVQLLAKIENQQGIENLDEIIEAADGIMIARGDMGIEVPFEMVPVYQKLIISKVNKAGKIVVTATNMLESMTYNPRATRSEISDVFNAVIDGTDATMLSGESANGKYPRESVRTMATVNKNAQTMLKEYGRLHPERYDKSTVTEVVAASVKNAAEAMDIKLIVALTESGNTARLISKHRPNADILAITFDEKVERGLMINWGVIPTMTEKPSSTDDMFEVAEKVALASGLVESGDNIIIVAGVPVGTGRTNTMRIRTVK.

Arginine 54 contacts substrate. Positions 56, 58, 88, and 89 each coordinate K(+). Residue 56–59 (NFSH) coordinates ATP. ATP contacts are provided by arginine 95 and lysine 184. A Mg(2+)-binding site is contributed by glutamate 252. Substrate is bound by residues glycine 275, aspartate 276, and threonine 308. Aspartate 276 lines the Mg(2+) pocket.

Belongs to the pyruvate kinase family. Homotetramer. It depends on Mg(2+) as a cofactor. Requires K(+) as cofactor.

The catalysed reaction is pyruvate + ATP = phosphoenolpyruvate + ADP + H(+). It functions in the pathway carbohydrate degradation; glycolysis; pyruvate from D-glyceraldehyde 3-phosphate: step 5/5. Its activity is regulated as follows. Regulated by phosphoenolpyruvate substrate and is allosterically activated by ribose-5-phosphate, AMP and other nucleoside monophosphates but not by fructose-1,6-bisphosphate. The polypeptide is Pyruvate kinase (pyk) (Lactococcus lactis subsp. lactis (strain IL1403) (Streptococcus lactis)).